The following is a 240-amino-acid chain: PF03932 family protein CutC (240 aa).

This sequence belongs to the CutC family.

It localises to the cytoplasm. The protein is PF03932 family protein CutC of Xanthomonas campestris pv. campestris (strain 8004).